A 1221-amino-acid chain; its full sequence is A disintegrin and metalloproteinase with thrombospondin motifs 18 (1221 aa).

Residues 1–47 (MECALLLACAFPAAGSGPPRGLAGLGRVAKALQLCCLCCASVAAALA) form the signal peptide. A propeptide spanning residues 48–284 (SDSSSGASGL…EYGSSGRPRR (237 aa)) is cleaved from the precursor. 2 N-linked (GlcNAc...) asparagine glycosylation sites follow: N151 and N190. The short motif at 252-259 (HFCGRRKK) is the Cysteine switch element. C254 is a Zn(2+) binding site. Positions 258-291 (KKYAPKPPTEDTYLRFDEYGSSGRPRRSAGKSQK) are disordered. Residues 265–275 (PTEDTYLRFDE) show a composition bias toward basic and acidic residues. Residues 293-498 (LNVETLVVAD…PQAGCLVDEP (206 aa)) enclose the Peptidase M12B domain. N-linked (GlcNAc...) asparagine glycosylation is present at N313. Cystine bridges form between C369–C420, C395–C402, C414–C493, C453–C477, C521–C546, C532–C553, C541–C572, C566–C577, C601–C638, C605–C643, and C616–C628. H436 is a Zn(2+) binding site. E437 is an active-site residue. Zn(2+) contacts are provided by H440 and H446. A Disintegrin domain is found at 498 to 577 (PKQAGQYKYP…LSMWCRQGQC (80 aa)). Residues 589–644 (HGQWSAWSKWSECSRTCGGGVKFQERHCNNPKPQYGGLFCPGSSRIYQLCNINPCN) enclose the TSP type-1 1 domain. N-linked (GlcNAc...) asparagine glycans are attached at residues N745, N838, and N909. Residues 750–876 (FYKGLYLNQH…TPPATKRPAY (127 aa)) are spacer. 4 TSP type-1 domains span residues 931 to 990 (CPAY…NSHA), 991 to 1049 (CPPQ…GRCP), 1052 to 1116 (SRLQ…RACP), and 1123 to 1178 (MVAG…NFCP). Residues 1184–1221 (EDPSCVDFFNWCHLVPQHGVCNHKFYGKQCCKSCTRKI) form the PLAC domain.

Zn(2+) is required as a cofactor. The precursor is cleaved by a furin endopeptidase. Post-translationally, glycosylated. Can be O-fucosylated by POFUT2 on a serine or a threonine residue found within the consensus sequence C1-X(2)-(S/T)-C2-G of the TSP type-1 repeat domains where C1 and C2 are the first and second cysteine residue of the repeat, respectively. Fucosylated repeats can then be further glycosylated by the addition of a beta-1,3-glucose residue by the glucosyltransferase, B3GALTL. Fucosylation mediates the efficient secretion of ADAMTS family members. Can also be C-glycosylated with one or two mannose molecules on tryptophan residues within the consensus sequence W-X-X-W of the TPRs, and N-glycosylated. These other glycosylations can also facilitate secretion. As to expression, expressed in fetal lung, liver, and kidney and in adult brain, prostate, submaxillary gland, and endothelium.

The protein resides in the secreted. The protein localises to the extracellular space. It is found in the extracellular matrix. This Homo sapiens (Human) protein is A disintegrin and metalloproteinase with thrombospondin motifs 18 (ADAMTS18).